A 321-amino-acid polypeptide reads, in one-letter code: MTTPSTKLNSGYDMPLVGFGLWKVNNETCADQIYHAIKAGYRLFDGACDYGNEVEAGKGVARAIQEGIVKREDLFIVSKLWNSFHDGDRVEPICRKQLADWGLDYFDLFIVHFPIALKYVDPAVRYPPGWLSENNKLEFSNASIQETWTAMESLVDKKLARSIGVSNFSAQLLMDLLRYARIRPATLQIEHHPYLTQERLVTYAQKEGIAVTAYSSFGPLSFVELDLKDAHETPKLFDHDVIKGIAQKHGKTPAQVLLRWATQRNIAVIPKSNDPTRLAQNLDVTGWDLETSEIEVISSLNRNLRFNDPLAPSRLDPIPDD.

Y50 acts as the Proton donor in catalysis. H112 is a binding site for substrate. Residues 166 to 167, 215 to 224, and 271 to 281 each bind NAD(+); these read SN, SSFGPLSFVE, and KSNDPTRLAQN.

Belongs to the aldo/keto reductase family.

The enzyme catalyses xylitol + NAD(+) = D-xylose + NADH + H(+). It carries out the reaction xylitol + NADP(+) = D-xylose + NADPH + H(+). The protein operates within carbohydrate metabolism; D-xylose degradation. Its function is as follows. Catalyzes the initial reaction in the xylose utilization pathway by reducing D-xylose into xylitol. Xylose is a major component of hemicelluloses such as xylan. Most fungi utilize D-xylose via three enzymatic reactions, xylose reductase (XR), xylitol dehydrogenase (XDH), and xylulokinase, to form xylulose 5-phosphate, which enters pentose phosphate pathway. In Neosartorya fischeri (strain ATCC 1020 / DSM 3700 / CBS 544.65 / FGSC A1164 / JCM 1740 / NRRL 181 / WB 181) (Aspergillus fischerianus), this protein is Probable NAD(P)H-dependent D-xylose reductase xyl1 (xyl1).